We begin with the raw amino-acid sequence, 688 residues long: DNA polymerase III subunit tau/gamma (688 aa).

Position 45–52 (45–52 (GTRGVGKT)) interacts with ATP. Positions 64, 73, 76, and 79 each coordinate Zn(2+). A disordered region spans residues 452 to 506 (QELDEEKSHKKMTALPVREMTEPKPKHIEKPTLPSNAAQAPQKNSTEENSSDDNV). Residues 470–481 (EMTEPKPKHIEK) are compositionally biased toward basic and acidic residues. A compositionally biased stretch (polar residues) spans 484 to 499 (LPSNAAQAPQKNSTEE).

Belongs to the DnaX/STICHEL family. As to quaternary structure, DNA polymerase III contains a core (composed of alpha, epsilon and theta chains) that associates with a tau subunit. This core dimerizes to form the POLIII' complex. PolIII' associates with the gamma complex (composed of gamma, delta, delta', psi and chi chains) and with the beta chain to form the complete DNA polymerase III complex.

The enzyme catalyses DNA(n) + a 2'-deoxyribonucleoside 5'-triphosphate = DNA(n+1) + diphosphate. In terms of biological role, DNA polymerase III is a complex, multichain enzyme responsible for most of the replicative synthesis in bacteria. This DNA polymerase also exhibits 3' to 5' exonuclease activity. The polypeptide is DNA polymerase III subunit tau/gamma (dnaX) (Haemophilus influenzae (strain ATCC 51907 / DSM 11121 / KW20 / Rd)).